Here is a 683-residue protein sequence, read N- to C-terminus: Cytochrome P450 monooxygenase htyF (683 aa).

Residues 8 to 28 (PALLAASVVLAVSLVSYVIQL) traverse the membrane as a helical segment. Asn29 carries N-linked (GlcNAc...) asparagine glycosylation. Position 481 (Cys481) interacts with heme. Asn581 carries an N-linked (GlcNAc...) asparagine glycan. A helical membrane pass occupies residues 588 to 608 (LYVFVVLVACVAALFIGIGIY).

Belongs to the cytochrome P450 family. Heme is required as a cofactor.

The protein localises to the membrane. It participates in antifungal biosynthesis. Cytochrome P450 monooxygenase; part of the gene cluster that mediates the de novo generation of L-homotyrosine from acetyl-CoA and 4-hydroxyphenyl-pyruvate. L-homotyrosine is a building block of echinocandin B, a fungal lipidated cyclic hexapeptide that acts as an antifungal agent. L-homotyrosine 4-hydroxyphenyl-pyruvate first undergoes an aldol-type condensation by htyA with the C-2 of acetyl-CoA followed by the release of CoA to form 2-(4-hydroxybenzyl)-malate. This is followed by isomerization of 2-(4-hydroxy-benzyl)-malate to 3-(4-hydroxybenzyl)-malate by htyD. Thereafter, 3-(4-hydroxybenzyl)-malate undergoes decarboxylation and oxidation to form 2-oxo-4-(4-hydroxybenzyl)butanoic acid, coupled to reduction of NAD(+) to NADH by htyC. The product then undergoes transamination catalyzed by htyB to form L-homotyrosine. The protein is Cytochrome P450 monooxygenase htyF of Aspergillus rugulosus (Emericella rugulosa).